Reading from the N-terminus, the 191-residue chain is Protein RER1 homolog (191 aa).

3 consecutive transmembrane segments (helical) span residues 35–55 (AFRW…IILL), 57–77 (GFYI…LLFL), and 135–155 (FFDV…LTFL).

The protein belongs to the RER1 family.

It is found in the membrane. Functionally, may be involved in protein transport along the secretory pathway. The chain is Protein RER1 homolog (rer-1) from Caenorhabditis elegans.